A 269-amino-acid polypeptide reads, in one-letter code: MATQKETTRKRDKSVNFRLGLRNMLAQIHPDISVQTEALSELSNIAVFLGKKISHGAVTLLPEGTKTIKSSAVLLAAGDLYGKDLGRHAVGEMTKAVTRYGSAKESKEGSRSSKAKLQISVARSERLLREHGGCSRVSEGAAVALAAAIEYFMGEVLELAGNAARDSKKVRISVKHITLAIQNDAALFAVVGKGVFSGAGVSLISVPIPRKKARKTTEKEASSPKKKAAPKKKKAASKQKKSLSDKELAKLTKKELAKYEKEQGMSPGY.

Residues 1-168 (MATQKETTRK…LAGNAARDSK (168 aa)) are histone fold. Positions 210–249 (RKKARKTTEKEASSPKKKAAPKKKKAASKQKKSLSDKELA) are disordered. The segment covering 224–241 (PKKKAAPKKKKAASKQKK) has biased composition (basic residues).

It localises to the host nucleus. Its subcellular location is the host cytoplasm. The protein resides in the virion. In terms of biological role, histone-like protein that is recruited to viral factories during viral replication and participates in viral DNA packaging and virion production probably by forming unstable nucleosome-like particles. May compact the viral DNA. This Melbournevirus (MelV) protein is Histone doublet H2B-H2A.